The sequence spans 387 residues: UDP-N-acetylglucosamine--N-acetylmuramyl-(pentapeptide) pyrophosphoryl-undecaprenol N-acetylglucosamine transferase (387 aa).

UDP-N-acetyl-alpha-D-glucosamine contacts are provided by residues 26–28 (TGG), asparagine 137, arginine 177, serine 205, and glutamine 306.

It belongs to the glycosyltransferase 28 family. MurG subfamily.

The protein localises to the cell inner membrane. The catalysed reaction is di-trans,octa-cis-undecaprenyl diphospho-N-acetyl-alpha-D-muramoyl-L-alanyl-D-glutamyl-meso-2,6-diaminopimeloyl-D-alanyl-D-alanine + UDP-N-acetyl-alpha-D-glucosamine = di-trans,octa-cis-undecaprenyl diphospho-[N-acetyl-alpha-D-glucosaminyl-(1-&gt;4)]-N-acetyl-alpha-D-muramoyl-L-alanyl-D-glutamyl-meso-2,6-diaminopimeloyl-D-alanyl-D-alanine + UDP + H(+). It functions in the pathway cell wall biogenesis; peptidoglycan biosynthesis. Its function is as follows. Cell wall formation. Catalyzes the transfer of a GlcNAc subunit on undecaprenyl-pyrophosphoryl-MurNAc-pentapeptide (lipid intermediate I) to form undecaprenyl-pyrophosphoryl-MurNAc-(pentapeptide)GlcNAc (lipid intermediate II). This Rhodospirillum rubrum (strain ATCC 11170 / ATH 1.1.1 / DSM 467 / LMG 4362 / NCIMB 8255 / S1) protein is UDP-N-acetylglucosamine--N-acetylmuramyl-(pentapeptide) pyrophosphoryl-undecaprenol N-acetylglucosamine transferase.